Here is a 488-residue protein sequence, read N- to C-terminus: Inosine-5'-monophosphate dehydrogenase (488 aa).

CBS domains lie at 95–153 (VISN…SIKI) and 157–216 (MTQE…AKDE). Residues aspartate 250 and 300 to 302 (GIG) each bind NAD(+). K(+) contacts are provided by glycine 302 and glycine 304. Serine 305 is a binding site for IMP. A K(+)-binding site is contributed by cysteine 307. Cysteine 307 acts as the Thioimidate intermediate in catalysis. Residues 340-342 (DGG), 363-364 (GS), and 387-391 (YRGMG) each bind IMP. Arginine 403 functions as the Proton acceptor in the catalytic mechanism. Glutamate 417 contacts IMP. A disordered region spans residues 468–488 (GLAESHPHNIQITKESPNYSF). K(+)-binding residues include glutamate 471, serine 472, and histidine 473. Over residues 475–488 (HNIQITKESPNYSF) the composition is skewed to polar residues.

It belongs to the IMPDH/GMPR family. Homotetramer. Requires K(+) as cofactor.

The enzyme catalyses IMP + NAD(+) + H2O = XMP + NADH + H(+). It functions in the pathway purine metabolism; XMP biosynthesis via de novo pathway; XMP from IMP: step 1/1. Mycophenolic acid (MPA) is a non-competitive inhibitor that prevents formation of the closed enzyme conformation by binding to the same site as the amobile flap. In contrast, mizoribine monophosphate (MZP) is a competitive inhibitor that induces the closed conformation. MPA is a potent inhibitor of mammalian IMPDHs but a poor inhibitor of the bacterial enzymes. MZP is a more potent inhibitor of bacterial IMPDH. Catalyzes the conversion of inosine 5'-phosphate (IMP) to xanthosine 5'-phosphate (XMP), the first committed and rate-limiting step in the de novo synthesis of guanine nucleotides, and therefore plays an important role in the regulation of cell growth. This is Inosine-5'-monophosphate dehydrogenase from Staphylococcus aureus (strain MW2).